The following is a 173-amino-acid chain: Shikimate kinase 1 (173 aa).

14–19 (GAGKST) is an ATP binding site. Serine 18 lines the Mg(2+) pocket. Residues aspartate 36, arginine 60, and glycine 82 each contribute to the substrate site. Residue arginine 120 participates in ATP binding. A substrate-binding site is contributed by arginine 140. Glutamine 157 contributes to the ATP binding site.

This sequence belongs to the shikimate kinase family. In terms of assembly, monomer. It depends on Mg(2+) as a cofactor.

The protein resides in the cytoplasm. The enzyme catalyses shikimate + ATP = 3-phosphoshikimate + ADP + H(+). It functions in the pathway metabolic intermediate biosynthesis; chorismate biosynthesis; chorismate from D-erythrose 4-phosphate and phosphoenolpyruvate: step 5/7. Functionally, catalyzes the specific phosphorylation of the 3-hydroxyl group of shikimic acid using ATP as a cosubstrate. The polypeptide is Shikimate kinase 1 (Erwinia tasmaniensis (strain DSM 17950 / CFBP 7177 / CIP 109463 / NCPPB 4357 / Et1/99)).